The primary structure comprises 484 residues: Probable efflux pump outer membrane protein TtgC (484 aa).

A signal peptide spans 1–17; sequence MTKSLLSLAVTAFILGG. Residue Cys-18 is the site of N-palmitoyl cysteine attachment. Cys-18 is lipidated: S-diacylglycerol cysteine.

This sequence belongs to the outer membrane factor (OMF) (TC 1.B.17) family.

Its subcellular location is the cell outer membrane. Its function is as follows. Probable outer membrane component of the TtgABC efflux pump with unknown specificity. The polypeptide is Probable efflux pump outer membrane protein TtgC (ttgC) (Pseudomonas putida (strain ATCC 47054 / DSM 6125 / CFBP 8728 / NCIMB 11950 / KT2440)).